Here is a 187-residue protein sequence, read N- to C-terminus: Elongation factor P (187 aa).

The protein belongs to the elongation factor P family.

The protein localises to the cytoplasm. The protein operates within protein biosynthesis; polypeptide chain elongation. In terms of biological role, involved in peptide bond synthesis. Stimulates efficient translation and peptide-bond synthesis on native or reconstituted 70S ribosomes in vitro. Probably functions indirectly by altering the affinity of the ribosome for aminoacyl-tRNA, thus increasing their reactivity as acceptors for peptidyl transferase. This Mycobacterium bovis (strain ATCC BAA-935 / AF2122/97) protein is Elongation factor P (efp).